The following is a 317-amino-acid chain: MLILPKTTIKALLLVIFGSLIVSFAIFFMVLENNEITVVPNLYSLAIEDAVLELQRKELIPHIEFKFSSSALDKGKVIDQGPKPGTVLRHGNKVIIFISKGAIINRVDSFIGKNIDDVIINLKANSFDNSKLLYHIVQPLEVESELPKGIIISQNPSPGSQISSLTDLQFLISKGKDHLDKHVKNYVGIYYKDAIASLLSDSINFDIDLANIGDFGNIISQSIPPGTKINESDKILITIAKPKVDNKIVFGILTYKLRQHPSYVDISVRLKGVDGKNSLIYSFKSKGGLIKLPYEVNKGSMIELYIYDKLINQTVIN.

A helical membrane pass occupies residues 11–31; that stretch reads ALLLVIFGSLIVSFAIFFMVL. PASTA domains are found at residues 33 to 100, 101 to 174, and 180 to 241; these read NNEI…FISK, GAII…LISK, and DKHV…TIAK.

It localises to the membrane. This is an uncharacterized protein from Borreliella burgdorferi (strain ATCC 35210 / DSM 4680 / CIP 102532 / B31) (Borrelia burgdorferi).